Consider the following 419-residue polypeptide: Elongation factor Tu, chloroplastic (419 aa).

The tr-type G domain maps to lysine 10–lysine 214. The tract at residues glycine 19–threonine 26 is G1. Glycine 19 to threonine 26 serves as a coordination point for GTP. Mg(2+) is bound at residue threonine 26. A G2 region spans residues glycine 60–asparagine 64. The segment at aspartate 81–glycine 84 is G3. GTP is bound by residues aspartate 81–histidine 85 and asparagine 136–aspartate 139. Residues asparagine 136 to aspartate 139 are G4. Residues serine 174–leucine 176 form a G5 region.

It belongs to the TRAFAC class translation factor GTPase superfamily. Classic translation factor GTPase family. EF-Tu/EF-1A subfamily.

The protein localises to the plastid. The protein resides in the chloroplast. The catalysed reaction is GTP + H2O = GDP + phosphate + H(+). Its function is as follows. GTP hydrolase that promotes the GTP-dependent binding of aminoacyl-tRNA to the A-site of ribosomes during protein biosynthesis. The sequence is that of Elongation factor Tu, chloroplastic (tufA) from Stigeoclonium helveticum (Green alga).